The chain runs to 517 residues: Maturase K (517 aa).

It belongs to the intron maturase 2 family. MatK subfamily.

It is found in the plastid. It localises to the chloroplast. Functionally, usually encoded in the trnK tRNA gene intron. Probably assists in splicing its own and other chloroplast group II introns. The protein is Maturase K of Palhinhaea cernua (Nodding clubmoss).